Consider the following 127-residue polypeptide: Alkaline proteinase inhibitor (127 aa).

The first 26 residues, 1 to 26, serve as a signal peptide directing secretion; that stretch reads MNINYFVRIVPVAVVLLVGISGASMA. Cys-53 and Cys-70 are disulfide-bonded.

This sequence belongs to the protease inhibitor I38 family.

The protein resides in the periplasm. In terms of biological role, inhibitor of the alkaline protease. The polypeptide is Alkaline proteinase inhibitor (inh) (Pseudomonas syringae pv. tomato (strain ATCC BAA-871 / DC3000)).